The primary structure comprises 243 residues: Ribonuclease PH (243 aa).

Residues Arg-91 and 129–131 (GTR) contribute to the phosphate site.

This sequence belongs to the RNase PH family. Homohexameric ring arranged as a trimer of dimers.

The catalysed reaction is tRNA(n+1) + phosphate = tRNA(n) + a ribonucleoside 5'-diphosphate. In terms of biological role, phosphorolytic 3'-5' exoribonuclease that plays an important role in tRNA 3'-end maturation. Removes nucleotide residues following the 3'-CCA terminus of tRNAs; can also add nucleotides to the ends of RNA molecules by using nucleoside diphosphates as substrates, but this may not be physiologically important. Probably plays a role in initiation of 16S rRNA degradation (leading to ribosome degradation) during starvation. The chain is Ribonuclease PH from Burkholderia thailandensis (strain ATCC 700388 / DSM 13276 / CCUG 48851 / CIP 106301 / E264).